Here is a 440-residue protein sequence, read N- to C-terminus: Ribosomal protein uS12 methylthiotransferase RimO (440 aa).

Positions 2–118 (KKAGIIHLGC…FVSLITSNGE (117 aa)) constitute an MTTase N-terminal domain. C11, C47, C81, C154, C158, and C161 together coordinate [4Fe-4S] cluster. One can recognise a Radical SAM core domain in the interval 140–370 (ISPNFWVYVK…MSTQKEISKK (231 aa)). The 68-residue stretch at 373–440 (AKLLGREFDV…RAYDLLGELV (68 aa)) folds into the TRAM domain.

Belongs to the methylthiotransferase family. RimO subfamily. The cofactor is [4Fe-4S] cluster.

The protein resides in the cytoplasm. It carries out the reaction L-aspartate(89)-[ribosomal protein uS12]-hydrogen + (sulfur carrier)-SH + AH2 + 2 S-adenosyl-L-methionine = 3-methylsulfanyl-L-aspartate(89)-[ribosomal protein uS12]-hydrogen + (sulfur carrier)-H + 5'-deoxyadenosine + L-methionine + A + S-adenosyl-L-homocysteine + 2 H(+). Functionally, catalyzes the methylthiolation of an aspartic acid residue of ribosomal protein uS12. The polypeptide is Ribosomal protein uS12 methylthiotransferase RimO (Dictyoglomus thermophilum (strain ATCC 35947 / DSM 3960 / H-6-12)).